Reading from the N-terminus, the 255-residue chain is Cyclase-like protein 1 (255 aa).

Residues 1–24 (MTRSVSFPLFLFAVVLSLSSSLLA) form the signal peptide.

Belongs to the Cyclase 1 superfamily.

The protein localises to the secreted. It is found in the extracellular space. The protein resides in the extracellular matrix. Its function is as follows. Acts as a negative regulator of fumonisin B1- and pathogen-induced programmed cell death (PCD), and regulates pathogen-induced symptom development. May function redundantly with CYCLASE2 for normal plant growth, development and viability. This Arabidopsis thaliana (Mouse-ear cress) protein is Cyclase-like protein 1.